Here is an 870-residue protein sequence, read N- to C-terminus: MGNRGMEELIPLVNKLQDAFSSIGQSCHLDLPQIAVVGGQSAGKSSVLENFVGRDFLPRGSGIVTRRPLILQLIFSKTEYAEFLHCKSKKFTDFDEVRQEIEAETDRVTGTNKGISPVPINLRVYSPHVLNLTLIDLPGITKVPVGDQPPDIEYQIKDMILQFISRESSLILAVTPANMDLANSDALKLAKEVDPQGLRTIGVITKLDLMDEGTDARDVLENKLLPLRRGYIGVVNRSQKDIEGKKDIRAALAAERKFFLSHPAYRHMADRMGTPHLQKTLNQQLTNHIRESLPTLRSKLQSQLLSLEKEVEEYKNFRPDDPTRKTKALLQMVQQFGVDFEKRIEGSGDQVDTLELSGGARINRIFHERFPFELVKMEFDEKDLRREISYAIKNIHGVRTGLFTPDLAFEAIVKKQVVKLKEPCLKCVDLVIQELISTVRQCTSKLSSYPRLREETERIVTTYIREREGRTKDQILLLIDIEQSYINTNHEDFIGFANAQQRSTQLNKKRAIPNQGEILVIRRGWLTINNISLMKGGSKEYWFVLTAESLSWYKDEEEKEKKYMLPLDNLKIRDVEKGFMSNKHVFAIFNTEQRNVYKDLRQIELACDSQEDVDSWKASFLRAGVYPEKDQAENEDGAQENTFSMDPQLERQVETIRNLVDSYVAIINKSIRDLMPKTIMHLMINNTKAFIHHELLAYLYSSADQSSLMEESAEQAQRRDDMLRMYHALKEALNIIGDISTSTVSTPVPPPVDDTWLQNTSGHSPTPQRRPVSSVHPPGRPPAVRGPTPGPPLIPMPVGATSSFSAPPIPSRPGPQSVFANNDPFSAPPQIPSRPARIPPGIPPGVPSRRAPAAPSRPTIIRPAEPSLLD.

The Dynamin-type G domain maps to 28 to 294; sequence HLDLPQIAVV…LTNHIRESLP (267 aa). The tract at residues 38–45 is G1 motif; it reads GGQSAGKS. The GDP site is built by S41, G43, K44, S45, S46, R59, and G60. Residues 64–66 form a G2 motif region; the sequence is VTR. The G3 motif stretch occupies residues 136–139; the sequence is DLPG. The interval 205 to 208 is G4 motif; that stretch reads TKLD. Residues K206, D208, and D211 each coordinate GDP. A Phosphotyrosine modification is found at Y231. The interval 235 to 238 is G5 motif; the sequence is VNRS. N236, R237, and Q239 together coordinate GDP. N6-acetyllysine is present on K299. The PH domain maps to 519–625; it reads LVIRRGWLTI…WKASFLRAGV (107 aa). Phosphotyrosine is present on Y597. Residue K598 is modified to N6-acetyllysine. Positions 653-744 constitute a GED domain; sequence VETIRNLVDS…IIGDISTSTV (92 aa). A disordered region spans residues 741–870; sequence TSTVSTPVPP…IRPAEPSLLD (130 aa). T755 is subject to Phosphothreonine. Residues 756 to 767 are compositionally biased toward polar residues; that stretch reads WLQNTSGHSPTP. A Phosphoserine; by CDK1 modification is found at S764. Positions 826–846 are enriched in pro residues; the sequence is SAPPQIPSRPARIPPGIPPGV. The span at 847-864 shows a compositional bias: low complexity; it reads PSRRAPAAPSRPTIIRPA.

Belongs to the TRAFAC class dynamin-like GTPase superfamily. Dynamin/Fzo/YdjA family. In terms of assembly, oligomerizes into a helical polymer that self-assembles around the vesicle membrane, when associated to the menbrane through lipid binding. Interacts with SHANK1 and SHANK2. Interacts with SNX9. Interacts (via C-terminal proline-rich domain (PRD)) with SNX18 (via SH3 domain); this interaction regulates ATG9A and ATG16L1 trafficking from recycling endosomes to sites of autophagosome formation. Interacts with SNX33 (via SH3 domain). Interacts with MYO1E (via SH3 domain). Interacts with PSTPIP1 (via SH3 domain). Interacts with CTNND2. Interacts (via C-terminal proline-rich domain (PRD)) with BIN1 (via SH3 domain); this interaction allows the recruitment of DNM2 to the membrane tubules and inhibits self-assembly-stimulated GTPase activity on the membrane. Interacts with GABARAP, GABARAPL1 and GABARAPL2. Interacts with MAP1LC3B (the lipidate and non-lipidated LC3 form); this interaction mediates recycling endosome scission leading to autophagosome release. Interacts with ITSN1. Interacts (via C-terminal proline-rich domain (PRD)) with SH3BP4 (via SH3 domain); this interaction controls the GTPase activity and is prevented by EGFR-induced tyrosine phosphorylation of either DNM2 or SH3BP4. Interacts with MYOF. May interact with PIK3C3. May be a component of a complex composed of RAB5A (in GDP-bound form), DYN2 and PIK3C3. Interacts with SDC4; this interaction is markedly enhanced at focal ahesion site upon induction of focal adhesions and stress-fiber formation. Interacts with ACTN1. Interacts with CTTN; this interaction stimulates the intrinsic GTPase activity of DNM2 and stabilizes the association of DNM2 and actin filaments; in addition this interaction is stimulated by ligand binding to the receptor, leading to the recruitment of the DNM2-CTTN complex to the sequestered receptor-ligand complex to its internalization. Interacts with NOSTRIN (via SH3 domain); this interaction allows the recruitment of NOS3 to dynamin-positive structures. Interacts with TUBG1; this interaction may participate in centrosome cohesion. In terms of processing, phosphorylation at Ser-848 by GSK3-alpha relieves the inhibition of BIN1 and promotes endocytosis. Phosphorylation at Ser-764 by CDK1 is greatly increased upon mitotic entry. It regulates cytokinesis downstream of calcineurin, and does not affect clathrin-mediated endocytosis. Dephosphorylated by calcineurin/PP2 during cytokinesis in a Ca(2+)- and calmodulin-dependent manner. Phosphorylated on tyrosine residues by EGFR. Phosphorylated on tyrosine residues after activation of SRC. In terms of tissue distribution, expressed in most tissues during embryonic development, including the peripheral nervous system although no expression is evident in skeletal muscle or heart.

The protein resides in the cytoplasm. Its subcellular location is the cytoskeleton. It localises to the cytoplasmic vesicle. It is found in the clathrin-coated vesicle. The protein localises to the cell projection. The protein resides in the uropodium. Its subcellular location is the endosome. It localises to the microtubule organizing center. It is found in the centrosome. The protein localises to the centriole. The protein resides in the recycling endosome. Its subcellular location is the phagocytic cup. It localises to the phagosome membrane. It is found in the podosome. The protein localises to the cell junction. The protein resides in the postsynaptic density. Its subcellular location is the synapse. It localises to the synaptosome. It is found in the midbody. The protein localises to the membrane. The protein resides in the clathrin-coated pit. It carries out the reaction GTP + H2O = GDP + phosphate + H(+). Its function is as follows. Catalyzes the hydrolysis of GTP and utilizes this energy to mediate vesicle scission at plasma membrane during endocytosis and filament remodeling at many actin structures during organization of the actin cytoskeleton. Plays an important role in vesicular trafficking processes, namely clathrin-mediated endocytosis (CME), exocytic and clathrin-coated vesicle from the trans-Golgi network, and PDGF stimulated macropinocytosis. During vesicular trafficking process, associates to the membrane, through lipid binding, and self-assembles into ring-like structure through oligomerization to form a helical polymer around the vesicle membrane and leading to vesicle scission. Plays a role in organization of the actin cytoskeleton by mediating arrangement of stress fibers and actin bundles in podocytes. During organization of the actin cytoskeleton, self-assembles into ring-like structure that directly bundles actin filaments to form typical membrane tubules decorated with dynamin spiral polymers. Self-assembly increases GTPase activity and the GTP hydrolysis causes the rapid depolymerization of dynamin spiral polymers, and results in dispersion of actin bundles. Remodels, through its interaction with CTTN, bundled actin filaments in a GTPase-dependent manner and plays a role in orchestrating the global actomyosin cytoskeleton. The interaction with CTTN stabilizes the interaction of DNM2 and actin filaments and stimulates the intrinsic GTPase activity that results in actin filament-barbed ends and increases the sensitivity of filaments in bundles to the actin depolymerizing factor, CFL1. Plays a role in the autophagy process, by participating in the formation of ATG9A vesicles destined for the autophagosomes through its interaction with SNX18, by mediating recycling endosome scission leading to autophagosome release through MAP1LC3B interaction. Also regulates maturation of apoptotic cell corpse-containing phagosomes by recruiting PIK3C3 to the phagosome membrane. Also plays a role in cytokinesis. May participate in centrosome cohesion through its interaction with TUBG1. Plays a role in the regulation of neuron morphology, axon growth and formation of neuronal growth cones. Involved in membrane tubulation. The protein is Dynamin-2 of Mus musculus (Mouse).